A 1239-amino-acid polypeptide reads, in one-letter code: Structural polyprotein (1239 aa).

Residues 1–35 (MFPYPTLNYPPMAPINPMAYRDPNPPRQVAPFRPP) form a necessary for nucleocapsid assembly and virus assembly region. The interval 1–101 (MFPYPTLNYP…RKPKPGKRQR (101 aa)) is disordered. A compositionally biased stretch (pro residues) spans 23-34 (PNPPRQVAPFRP). The segment at 36-69 (LAAQIEDLRRSIANLTLKQRAPNPPAGPPAKRKK) is host transcription inhibition. Positions 43–50 (LRRSIANL) match the Supraphysiological nuclear export signal motif. N-linked (GlcNAc...) asparagine; by host glycosylation occurs at Asn-49. Residues 66 to 69 (KRKK) carry the Nuclear localization signal motif. Residues 79–101 (KKKRPPPPAKKQKRKPKPGKRQR) are compositionally biased toward basic residues. Positions 81–111 (KRPPPPAKKQKRKPKPGKRQRMCMKLESDKT) are binding to the viral RNA. The segment at 96–110 (PGKRQRMCMKLESDK) is ribosome-binding. Ser-108 is subject to Phosphoserine. Residues 110–259 (KTFPIMLNGQ…KDTPEGSEPW (150 aa)) enclose the Peptidase S3 domain. Thr-111 carries the post-translational modification Phosphothreonine. His-136 acts as the Charge relay system in catalysis. Residues 152 to 157 (KKASIY) are interaction with spike glycoprotein E2. Residues Asp-158 and Ser-210 each act as charge relay system in the active site. Residues 244–248 (QKGVT) are interaction with spike glycoprotein E2. The interval 260–271 (SLATVMCVLANI) is functions as an uncleaved signal peptide for the precursor of protein E3/E2. Topologically, residues 260–681 (SLATVMCVLA…HVVVVYYYNR (422 aa)) are extracellular. Disulfide bonds link Cys-266–Cys-275, Cys-280–Cys-284, Cys-283–Cys-315, Cys-341–Cys-444, Cys-344–Cys-349, Cys-411–Cys-425, Cys-472–Cys-585, Cys-521–Cys-545, and Cys-523–Cys-539. A glycan (N-linked (GlcNAc...) asparagine; by host) is linked at Asn-270. N-linked (GlcNAc...) asparagine; by host glycosylation occurs at Asn-637. A helical transmembrane segment spans residues 682–702 (YPLTTIIGLCTCVAIIMVSCD). Over 703–742 (HPCGSFSGLRNLCITPYKLAPNAQVPILLALLCCIKPTRA) the chain is Cytoplasmic. Cys-705 is lipidated: S-palmitoyl cysteine; by host. The interval 710 to 714 (GLRNL) is interaction with the capsid protein. Residues 714-734 (LCITPYKLAPNAQVPILLALL) form a transient transmembrane before p62-6K protein processing region. 3 S-palmitoyl cysteine; by host lipidation sites follow: Cys-715, Cys-735, and Cys-736. Cys-715 and Cys-736 are oxidised to a cystine. Over 743-754 (DDTLQVLNYLWN) the chain is Extracellular. The chain crosses the membrane as a helical span at residues 755 to 775 (NNQNFFWMQTLIPLAALIVCM). Residue Arg-776 is a topological domain, cytoplasmic. Residues 777 to 797 (MLAALFCCGPAFLLVCGAWAA) traverse the membrane as a helical segment. Over 798–1215 (AYEHTAVMPN…WSWLKVLVGG (418 aa)) the chain is Extracellular. 4 cysteine pairs are disulfide-bonded: Cys-847-Cys-912, Cys-860-Cys-892, Cys-861-Cys-894, and Cys-866-Cys-876. Residues 882–899 (VYPFMWGGAYCFCDTENT) are E1 fusion peptide loop. Residues Asn-932 and Asn-1069 are each glycosylated (N-linked (GlcNAc...) asparagine; by host). 3 disulfides stabilise this stretch: Cys-1058–Cys-1070, Cys-1100–Cys-1175, and Cys-1105–Cys-1179. The chain crosses the membrane as a helical span at residues 1216 to 1236 (TSAFIVLGLIATAVVALVLFF). Residues 1237–1239 (HRH) are Cytoplasmic-facing.

As to quaternary structure, homodimer. Homomultimer. Interacts with host karyopherin KPNA4; this interaction allows the nuclear import of the viral capsid protein. Interacts with spike glycoprotein E2. Interacts with host IRAK1; the interaction leads to inhibition of IRAK1-dependent signaling. Part of a tetrameric complex composed of host CRM1, host importin alpha/beta dimer and the viral capsid; this complex blocks the receptor-mediated transport through the nuclear pore. Interacts with host phosphatase PPP1CA; this interaction dephosphorylates the capsid protein, which increases its ability to bind to the viral genome. In terms of assembly, the precursor of protein E3/E2 and E1 form a heterodimer shortly after synthesis. The precursor of protein E3/E2 and E1 form a heterodimer shortly after synthesis. Processing of the precursor of protein E3/E2 into E2 and E3 results in a heterodimer of the spike glycoproteins E2 and E1. Spike at virion surface are constituted of three E2-E1 heterodimers. After target cell attachment and endocytosis, E1 change conformation to form homotrimers. E2-E1 heterodimers interact with host VLDLR or LRP8/APOER2 to mediate viral entry. Interacts with 6K protein. As to quaternary structure, interacts with spike glycoprotein E1. Processing of the precursor of protein E3/E2 into E2 and E3 results in a heterodimer of the spike glycoproteins E2 and E1. Spike at virion surface are constituted of a trimer of E2-E1 heterodimers. Interacts with 6K protein. E2-E1 heterodimers interact with host VLDLR or LRP8/APOER2 to mediate viral entry. Interacts (via E2-A) with host VLDLR (via class A repeats); this interaction mediates viral entry into host cell. Interacts with host LRP8/APOER2 (via class A repeats); this interaction mediates viral entry into host cell. In terms of assembly, oligomer. Interacts with spike glycoprotein E1. Interacts with spike glycoprotein E2. In terms of processing, structural polyprotein: Specific enzymatic cleavages in vivo yield mature proteins. Capsid protein is auto-cleaved during polyprotein translation, unmasking a signal peptide at the N-terminus of the precursor of E3/E2. The remaining polyprotein is then targeted to the host endoplasmic reticulum, where host signal peptidase cleaves it into pE2, 6K and E1 proteins. pE2 is further processed to mature E3 and E2 by host furin in trans-Golgi vesicle. Post-translationally, phosphorylated on serine and threonine residues. Palmitoylated via thioester bonds. These palmitoylations may induce disruption of the C-terminus transmembrane. This would result in the reorientation of E2 C-terminus from lumenal to cytoplasmic side. In terms of processing, N-glycosylated. Post-translationally, palmitoylated via thioester bonds.

The protein resides in the virion. The protein localises to the host cytoplasm. Its subcellular location is the host cell membrane. It is found in the host nucleus. It localises to the virion membrane. The protein resides in the host Golgi apparatus. The protein localises to the host trans-Golgi network. Its subcellular location is the host endoplasmic reticulum. The enzyme catalyses Autocatalytic release of the core protein from the N-terminus of the togavirus structural polyprotein by hydrolysis of a -Trp-|-Ser- bond.. Its function is as follows. Forms an icosahedral capsid with a T=4 symmetry composed of 240 copies of the capsid protein surrounded by a lipid membrane through which penetrate 80 spikes composed of trimers of E1-E2 heterodimers. The capsid protein binds to the viral RNA genome at a site adjacent to a ribosome binding site for viral genome translation following genome release. Possesses a protease activity that results in its autocatalytic cleavage from the nascent structural protein. Following its self-cleavage, the capsid protein transiently associates with ribosomes, and within several minutes the protein binds to viral RNA and rapidly assembles into icosahedric core particles. The resulting nucleocapsid eventually associates with the cytoplasmic domain of the spike glycoprotein E2 at the cell membrane, leading to budding and formation of mature virions. In case of infection, new virions attach to target cells and after clathrin-mediated endocytosis their membrane fuses with the host endosomal membrane. This leads to the release of the nucleocapsid into the cytoplasm, followed by an uncoating event necessary for the genomic RNA to become accessible. The uncoating might be triggered by the interaction of capsid proteins with ribosomes. Binding of ribosomes would release the genomic RNA since the same region is genomic RNA-binding and ribosome-binding. Specifically inhibits interleukin-1 receptor-associated kinase 1/IRAK1-dependent signaling during viral entry, representing a means by which the alphaviruses may evade innate immune detection and activation prior to viral gene expression. Inhibits host transcription. Forms a tetrameric complex with XPO1/CRM1 and the nuclear import receptor importin. This complex blocks the central channel of host nuclear pores thereby inhibiting the receptor-mediated nuclear transport and thus the host mRNA and rRNA transcription. The inhibition of transcription is linked to a cytopathic effect on the host cell. In terms of biological role, provides the signal sequence for the translocation of the precursor of protein E3/E2 to the host endoplasmic reticulum. Furin-cleaved E3 remains associated with spike glycoprotein E1 and mediates pH protection of the latter during the transport via the secretory pathway. After virion release from the host cell, the assembly protein E3 is gradually released in the extracellular space. Functionally, plays a role in viral attachment to target host cell, by binding to the cell receptors VLDLR or LRP8/APOER2. Synthesized as a p62 precursor which is processed by furin at the cell membrane just before virion budding, giving rise to E2-E1 heterodimer. The p62-E1 heterodimer is stable, whereas E2-E1 is unstable and dissociate at low pH. p62 is processed at the last step, presumably to avoid E1 fusion activation before its final export to cell surface. E2 C-terminus contains a transitory transmembrane that would be disrupted by palmitoylation, resulting in reorientation of the C-terminal tail from lumenal to cytoplasmic side. This step is critical since E2 C-terminus is involved in budding by interacting with capsid proteins. This release of E2 C-terminus in cytoplasm occurs lately in protein export, and precludes premature assembly of particles at the endoplasmic reticulum membrane. Acts as a viroporin that participates in virus glycoprotein processing and transport to the plasma membrane, cell permeabilization and budding of viral particles. Disrupts the calcium homeostasis of the cell, probably at the endoplasmic reticulum level. This leads to cytoplasmic calcium elevation. Because of its lipophilic properties, the 6K protein is postulated to influence the selection of lipids that interact with the transmembrane domains of the glycoproteins, which, in turn, affects the deformability of the bilayer required for the extreme curvature that occurs as budding proceeds. Present in low amount in virions, about 3% compared to viral glycoproteins. Its function is as follows. Class II viral fusion protein. Fusion activity is inactive as long as E1 is bound to E2 in mature virion. After virus attachment to target cell via host VLDLR or LRP8/APOER2 and endocytosis, acidification of the endosome induces dissociation of E1/E2 heterodimer and concomitant trimerization of the E1 subunits. This E1 trimer is fusion active, and promotes release of viral nucleocapsid in cytoplasm after endosome and viral membrane fusion. Efficient fusion requires the presence of cholesterol and sphingolipid in the target membrane. In Aedes (Human), this protein is Structural polyprotein.